We begin with the raw amino-acid sequence, 192 residues long: uncharacterized protein (192 aa).

In terms of domain architecture, B12-binding spans 72–192 (GATVLLIVPP…SLVISEFSLV (121 aa)).

This is an uncharacterized protein from Rhodobacter capsulatus (Rhodopseudomonas capsulata).